Reading from the N-terminus, the 152-residue chain is MLALVQRVCEARVVVEGEVVGRIGRGLLVFLCAERGDTEAEGERLLVKLLKLRIFADAQGRMNRSVQDVGGGLLIVSQFTLAADASGGNRPSFSGAAAPADGLRLYEVFVRGARALHPEVESGQFGADMQVHLVNDGPVTVPLRIVPTALPV.

Positions 137 to 138 match the Gly-cisPro motif, important for rejection of L-amino acids motif; sequence GP.

It belongs to the DTD family. As to quaternary structure, homodimer.

The protein localises to the cytoplasm. The catalysed reaction is glycyl-tRNA(Ala) + H2O = tRNA(Ala) + glycine + H(+). The enzyme catalyses a D-aminoacyl-tRNA + H2O = a tRNA + a D-alpha-amino acid + H(+). Its function is as follows. An aminoacyl-tRNA editing enzyme that deacylates mischarged D-aminoacyl-tRNAs. Also deacylates mischarged glycyl-tRNA(Ala), protecting cells against glycine mischarging by AlaRS. Acts via tRNA-based rather than protein-based catalysis; rejects L-amino acids rather than detecting D-amino acids in the active site. By recycling D-aminoacyl-tRNA to D-amino acids and free tRNA molecules, this enzyme counteracts the toxicity associated with the formation of D-aminoacyl-tRNA entities in vivo and helps enforce protein L-homochirality. In Aromatoleum aromaticum (strain DSM 19018 / LMG 30748 / EbN1) (Azoarcus sp. (strain EbN1)), this protein is D-aminoacyl-tRNA deacylase.